The following is a 376-amino-acid chain: MSRTRYDWSKLCHDILRLILESLHYKDYHRARTVCSNWYTASTTCKRPLYPWRIKFNKISTSLFDPREDKIHEIQHPGIEFSDRNVLASCSNWFLMVDSGLEFYLLNAFTRERINLPSMESSILGKERLEKEVAWKHFIERTDIISTKKQACLWINERTGDYVVAWSIKQHYLFTYKKGDDSWLNLEGTKCVSMALNKDYKLYVYALDNSIKIFDLYGEFPSEIVEENPYRNHPFSFRFVSKPEEHAWKQVVAITNSGEVLMIVSLKGLEDKRLFYIYKMDFGSCNWERVDSLGGEMLIFGHGVTIRAPILDINGLGIKSDSICFRGDDLWPLSQLFIPITQPMCGVFDLATSTITWPKSLDASVLKSFWFVPGHA.

Residues 6–53 (YDWSKLCHDILRLILESLHYKDYHRARTVCSNWYTASTTCKRPLYPWR) form the F-box domain.

In Arabidopsis thaliana (Mouse-ear cress), this protein is Putative F-box protein At2g33200.